Here is a 426-residue protein sequence, read N- to C-terminus: Glutamate-1-semialdehyde 2,1-aminomutase (426 aa).

An N6-(pyridoxal phosphate)lysine modification is found at Lys265.

Belongs to the class-III pyridoxal-phosphate-dependent aminotransferase family. HemL subfamily. Homodimer. The cofactor is pyridoxal 5'-phosphate.

The protein resides in the cytoplasm. The catalysed reaction is (S)-4-amino-5-oxopentanoate = 5-aminolevulinate. It participates in porphyrin-containing compound metabolism; protoporphyrin-IX biosynthesis; 5-aminolevulinate from L-glutamyl-tRNA(Glu): step 2/2. This Shigella flexneri serotype 5b (strain 8401) protein is Glutamate-1-semialdehyde 2,1-aminomutase.